A 688-amino-acid chain; its full sequence is MTRKQRAIFEPALVRTALLDAVKKLDPRVQWRNPVMFVVYLGSGLTTLIWLAILSGQTTGSALFTGSVALWLWFTVLFANFAEALAEGRSKAQAESLRGVKKTSWAKKLSEARFDAPQEKVSADSLRKGDVVLIEAGDTVPCDGEVLEGGASVDESAITGESAPVIRESGGDFSSVTGGTRVLSDWLVVECSVNPGETFLDRMIAMVEGAKRRKTPNEVALTILLVALTIVFLLATATLYPFSVFSVEANQAGSPVTITVLVALLVCLIPTTIGGLLSAIGVAGMSRMLGANVIATSGRAVEAAGDVDVLLLDKTGTITLGNRQASEFLPAPGVTEQQLADAAQLSSLADETPEGRSIVVLAKQRFNLRERDLHSLNATFVPFSAQTRMSGVNVQDRMIRKGAVDAIRRHVESNQGHFPRAVEDAVESVARTGGTPLVVADGPRVLGVVALKDIVKGGIKERFAELRKMGIKTVMITGDNRLTAAAIAAEAGVDDFLAEATPEAKLALIRQYQAEGRLVAMTGDGTNDAPALAQADVAVAMNSGTQAAKEAGNMVDLDSNPTKLIEVVHIGKQMLMTRGSLTTFSIANDVAKYFAIIPAAFAATYPQLNALNVMQLHSPASAILSAVIFNALIIVFLIPLALKGVSYKAMSAAALLRRNLWIYGLGGLLVPFVGIKLIDLVLAALIMS.

The next 4 helical transmembrane spans lie at 34 to 54 (PVMF…LAIL), 62 to 82 (ALFT…ANFA), 219 to 239 (VALT…TATL), and 260 to 280 (VLVA…LSAI). The active-site 4-aspartylphosphate intermediate is the Asp313. Residues Asp350, Glu354, 383–390 (FSAQTRMS), and Lys401 contribute to the ATP site. Mg(2+) is bound by residues Asp524 and Asp528. The next 3 membrane-spanning stretches (helical) occupy residues 594–614 (FAII…LNVM), 622–642 (AILS…PLAL), and 667–687 (GLLV…ALIM).

This sequence belongs to the cation transport ATPase (P-type) (TC 3.A.3) family. Type IA subfamily. The system is composed of three essential subunits: KdpA, KdpB and KdpC.

The protein localises to the cell inner membrane. It catalyses the reaction K(+)(out) + ATP + H2O = K(+)(in) + ADP + phosphate + H(+). Its function is as follows. Part of the high-affinity ATP-driven potassium transport (or Kdp) system, which catalyzes the hydrolysis of ATP coupled with the electrogenic transport of potassium into the cytoplasm. This subunit is responsible for energy coupling to the transport system and for the release of the potassium ions to the cytoplasm. In Yersinia enterocolitica serotype O:8 / biotype 1B (strain NCTC 13174 / 8081), this protein is Potassium-transporting ATPase ATP-binding subunit.